Reading from the N-terminus, the 365-residue chain is UDP-N-acetylglucosamine--N-acetylmuramyl-(pentapeptide) pyrophosphoryl-undecaprenol N-acetylglucosamine transferase (365 aa).

Residues 19–21 (TGG), N131, R170, S201, I255, 274–279 (ALTVTE), and Q300 contribute to the UDP-N-acetyl-alpha-D-glucosamine site.

This sequence belongs to the glycosyltransferase 28 family. MurG subfamily.

The protein resides in the cell inner membrane. It carries out the reaction di-trans,octa-cis-undecaprenyl diphospho-N-acetyl-alpha-D-muramoyl-L-alanyl-D-glutamyl-meso-2,6-diaminopimeloyl-D-alanyl-D-alanine + UDP-N-acetyl-alpha-D-glucosamine = di-trans,octa-cis-undecaprenyl diphospho-[N-acetyl-alpha-D-glucosaminyl-(1-&gt;4)]-N-acetyl-alpha-D-muramoyl-L-alanyl-D-glutamyl-meso-2,6-diaminopimeloyl-D-alanyl-D-alanine + UDP + H(+). The protein operates within cell wall biogenesis; peptidoglycan biosynthesis. Functionally, cell wall formation. Catalyzes the transfer of a GlcNAc subunit on undecaprenyl-pyrophosphoryl-MurNAc-pentapeptide (lipid intermediate I) to form undecaprenyl-pyrophosphoryl-MurNAc-(pentapeptide)GlcNAc (lipid intermediate II). This chain is UDP-N-acetylglucosamine--N-acetylmuramyl-(pentapeptide) pyrophosphoryl-undecaprenol N-acetylglucosamine transferase, found in Acinetobacter baumannii (strain AB307-0294).